Reading from the N-terminus, the 219-residue chain is Adenylate kinase (219 aa).

12–17 (GAGKGT) lines the ATP pocket. An NMP region spans residues 32-61 (STGDMLRAAVKAGTPIGLQAKAVMDAGELV). Residues threonine 33, arginine 38, 59–61 (ELV), 87–90 (GYPR), and glutamine 94 contribute to the AMP site. Positions 128–165 (GRFSCARCGEGYHDRYKLPKVADICDVCGSKEFKRRPD) are LID. Residue arginine 129 coordinates ATP. Residues cysteine 132, cysteine 135, cysteine 152, and cysteine 155 each contribute to the Zn(2+) site. Residues arginine 162 and arginine 174 each contribute to the AMP site. ATP is bound at residue alanine 202.

The protein belongs to the adenylate kinase family. As to quaternary structure, monomer.

It is found in the cytoplasm. The enzyme catalyses AMP + ATP = 2 ADP. The protein operates within purine metabolism; AMP biosynthesis via salvage pathway; AMP from ADP: step 1/1. In terms of biological role, catalyzes the reversible transfer of the terminal phosphate group between ATP and AMP. Plays an important role in cellular energy homeostasis and in adenine nucleotide metabolism. This Sphingopyxis alaskensis (strain DSM 13593 / LMG 18877 / RB2256) (Sphingomonas alaskensis) protein is Adenylate kinase.